A 123-amino-acid polypeptide reads, in one-letter code: Large ribosomal subunit protein mL52 (123 aa).

The transit peptide at 1-23 directs the protein to the mitochondrion; the sequence is MAALGTVLFTGVRRLHCSVAAWA. Positions 99 to 109 are enriched in basic and acidic residues; the sequence is QEEQRKQENAL. Residues 99–123 form a disordered region; the sequence is QEEQRKQENALKPKGASLKSPLPSQ.

The protein belongs to the mitochondrion-specific ribosomal protein mL52 family. In terms of assembly, component of the mitochondrial large ribosomal subunit (mt-LSU). Mature mammalian 55S mitochondrial ribosomes consist of a small (28S) and a large (39S) subunit. The 28S small subunit contains a 12S ribosomal RNA (12S mt-rRNA) and 30 different proteins. The 39S large subunit contains a 16S rRNA (16S mt-rRNA), a copy of mitochondrial valine transfer RNA (mt-tRNA(Val)), which plays an integral structural role, and 52 different proteins. mL52 connects the central protuberance to the body of the ribosome.

The protein localises to the mitochondrion. This is Large ribosomal subunit protein mL52 (MRPL52) from Homo sapiens (Human).